A 705-amino-acid polypeptide reads, in one-letter code: Ribosomal RNA large subunit methyltransferase K/L (705 aa).

The THUMP domain occupies 43–154; it reads VVYRCCLWSR…GEKGILGFDL (112 aa).

The protein belongs to the methyltransferase superfamily. RlmKL family.

The protein localises to the cytoplasm. It carries out the reaction guanosine(2445) in 23S rRNA + S-adenosyl-L-methionine = N(2)-methylguanosine(2445) in 23S rRNA + S-adenosyl-L-homocysteine + H(+). The catalysed reaction is guanosine(2069) in 23S rRNA + S-adenosyl-L-methionine = N(2)-methylguanosine(2069) in 23S rRNA + S-adenosyl-L-homocysteine + H(+). Specifically methylates the guanine in position 2445 (m2G2445) and the guanine in position 2069 (m7G2069) of 23S rRNA. The chain is Ribosomal RNA large subunit methyltransferase K/L from Aliivibrio fischeri (strain MJ11) (Vibrio fischeri).